A 1248-amino-acid polypeptide reads, in one-letter code: Kinesin-like protein KIN-14I (1248 aa).

Residues 88–244 form the MyTH4 domain; that stretch reads FQKDPIPTSL…PAREEIEALL (157 aa). In terms of domain architecture, FERM spans 249 to 563; the sequence is LTTIVFFLDE…HINDVMLRRY (315 aa). A coiled-coil region spans residues 586 to 659; it reads NIEIYEKRVQ…LDKLKSLCDE (74 aa). The disordered stretch occupies residues 675–704; that stretch reads ETRLKSGQGQESSNRTGVSGNHFERDTLPT. Polar residues predominate over residues 679–693; that stretch reads KSGQGQESSNRTGVS. A coiled-coil region spans residues 708–799; sequence VNNSIEMLAK…TRSLNVTEST (92 aa). Residues 872–1193 form the Kinesin motor domain; it reads KIRVFCRLRP…LMYASRVRCI (322 aa). Residue 953–960 coordinates ATP; the sequence is GQTGSGKT. Residues 1201-1223 form a calmodulin-binding region; that stretch reads VAPKEIMRLKKLIAYWKEQAGKR. Residues 1220-1248 form a disordered region; it reads AGKRSEDDDLEEIQEERTPKEKADNRLTS. Positions 1234–1248 are enriched in basic and acidic residues; the sequence is EERTPKEKADNRLTS.

The protein belongs to the TRAFAC class myosin-kinesin ATPase superfamily. Kinesin family. KIN-14 subfamily. In terms of assembly, binds microtubules via its N-terminus containing the MyTH4 domain and binds F-actin via its FERM domain. Binding to calmodulin inhibits microtubule binding activity.

It is found in the cytoplasm. The protein localises to the cytoskeleton. Its function is as follows. Minus-end microtubule-dependent motor protein involved in the regulation of cell division. This chain is Kinesin-like protein KIN-14I, found in Oryza sativa subsp. japonica (Rice).